The following is a 327-amino-acid chain: Undecaprenyl-phosphate 4-deoxy-4-formamido-L-arabinose transferase (327 aa).

Over methionine 1–leucine 235 the chain is Cytoplasmic. The helical transmembrane segment at leucine 236–valine 256 threads the bilayer. The Periplasmic segment spans residues leucine 257–glycine 269. The helical transmembrane segment at valine 270–leucine 290 threads the bilayer. Residues leucine 291–glutamine 327 are Cytoplasmic-facing.

It belongs to the glycosyltransferase 2 family.

The protein resides in the cell inner membrane. It carries out the reaction UDP-4-deoxy-4-formamido-beta-L-arabinose + di-trans,octa-cis-undecaprenyl phosphate = 4-deoxy-4-formamido-alpha-L-arabinopyranosyl di-trans,octa-cis-undecaprenyl phosphate + UDP. Its pathway is glycolipid biosynthesis; 4-amino-4-deoxy-alpha-L-arabinose undecaprenyl phosphate biosynthesis; 4-amino-4-deoxy-alpha-L-arabinose undecaprenyl phosphate from UDP-4-deoxy-4-formamido-beta-L-arabinose and undecaprenyl phosphate: step 1/2. It functions in the pathway bacterial outer membrane biogenesis; lipopolysaccharide biosynthesis. In terms of biological role, catalyzes the transfer of 4-deoxy-4-formamido-L-arabinose from UDP to undecaprenyl phosphate. The modified arabinose is attached to lipid A and is required for resistance to polymyxin and cationic antimicrobial peptides. The chain is Undecaprenyl-phosphate 4-deoxy-4-formamido-L-arabinose transferase from Salmonella dublin (strain CT_02021853).